Consider the following 119-residue polypeptide: Ribonuclease P protein component (119 aa).

It belongs to the RnpA family. In terms of assembly, consists of a catalytic RNA component (M1 or rnpB) and a protein subunit.

It carries out the reaction Endonucleolytic cleavage of RNA, removing 5'-extranucleotides from tRNA precursor.. Functionally, RNaseP catalyzes the removal of the 5'-leader sequence from pre-tRNA to produce the mature 5'-terminus. It can also cleave other RNA substrates such as 4.5S RNA. The protein component plays an auxiliary but essential role in vivo by binding to the 5'-leader sequence and broadening the substrate specificity of the ribozyme. This is Ribonuclease P protein component from Klebsiella pneumoniae (strain 342).